The primary structure comprises 514 residues: 1-pyrroline-5-carboxylate dehydrogenase (514 aa).

Active-site residues include E286 and C320.

The protein belongs to the aldehyde dehydrogenase family. RocA subfamily.

It catalyses the reaction L-glutamate 5-semialdehyde + NAD(+) + H2O = L-glutamate + NADH + 2 H(+). It participates in amino-acid degradation; L-proline degradation into L-glutamate; L-glutamate from L-proline: step 2/2. This chain is 1-pyrroline-5-carboxylate dehydrogenase, found in Staphylococcus aureus (strain MSSA476).